The chain runs to 325 residues: Isoaspartyl peptidase/L-asparaginase (325 aa).

Thr193 acts as the Nucleophile in catalysis. Residues 221–224 (RIGD) and 243–246 (TGKG) contribute to the substrate site.

The protein belongs to the Ntn-hydrolase family. In terms of assembly, heterotetramer of two alpha and two beta chains arranged as a dimer of alpha/beta heterodimers. Post-translationally, cleaved into an alpha and beta chain by autocatalysis; this activates the enzyme. The N-terminal residue of the beta subunit is responsible for the nucleophile hydrolase activity. As to expression, expressed in ripening seeds and developing nodules.

It catalyses the reaction Cleavage of a beta-linked Asp residue from the N-terminus of a polypeptide.. Functionally, degrades proteins damaged by L-isoaspartyl residue formation (also known as beta-Asp residues). Also has L-asparaginase activity, which is used to liberate stored nitrogen during seed development. This chain is Isoaspartyl peptidase/L-asparaginase, found in Lupinus luteus (European yellow lupine).